Reading from the N-terminus, the 485-residue chain is uncharacterized protein (485 aa).

Over 1 to 30 (MFSWANIGSNEYLPLKNDRKAYLNQWAKRS) the chain is Cytoplasmic. The helical transmembrane segment at 31–51 (GLAIAAICILGILILAIVKLF) threads the bilayer. Over 52 to 485 (CFKAIIFPIV…DIEQAYSKLI (434 aa)) the chain is Extracellular. Residue Asn67 is glycosylated (N-linked (GlcNAc...) asparagine). Positions 74 to 404 (STVIVISLDG…YEPLGVHGYD (331 aa)) are phosphodiesterase. The active-site Nucleophile is the Thr118. Asn306, Asn338, Asn453, and Asn467 each carry an N-linked (GlcNAc...) asparagine glycan.

This sequence belongs to the nucleotide pyrophosphatase/phosphodiesterase family.

The protein localises to the membrane. This is an uncharacterized protein from Schizosaccharomyces pombe (strain 972 / ATCC 24843) (Fission yeast).